Reading from the N-terminus, the 713-residue chain is Topoisomerase subunit TopoM (713 aa).

Positions 41–504 constitute a Topo IIA-type catalytic domain; sequence IPSAYDGLKP…DATPVSRGDE (464 aa). Catalysis depends on Tyr-128, which acts as the O-(5'-phospho-DNA)-tyrosine intermediate. A disordered region spans residues 694 to 713; that stretch reads NRAKASIKGSGADVTPAPAE.

The protein belongs to the type II topoisomerase GyrA/ParC subunit family. A complex of TopoN and TopoM, possibly a heterotetramer. Mg(2+) is required as a cofactor.

The enzyme catalyses ATP-dependent breakage, passage and rejoining of double-stranded DNA.. With respect to regulation, inhibited by quinolone antibiotic ciprofloxacin and coumarin antibiotic novobiocin, but at much higher concentrations than is usual for DNA gyrase/topoisomerase. In terms of biological role, catalyzes the relaxation of negatively supercoiled DNA in the presence of ATP or dATP but not other nucleotides. Individual subunits have no activity. Not able to negatively supercoil DNA, it can however introduce positive supercoils in DNA. Relaxes positive supercoils in an ATP-dependent manner. Catenates and decatenates DNA. Generates dsDNA breaks in the presence of the quinolone antibiotic ciprofloxacin, showing it is a topoisomerase. In Mycolicibacterium smegmatis (strain ATCC 700084 / mc(2)155) (Mycobacterium smegmatis), this protein is Topoisomerase subunit TopoM.